We begin with the raw amino-acid sequence, 220 residues long: Histone deacetylase complex subunit SAP30 (220 aa).

An interaction with NCOR1 region spans residues 1–129 (MNGFTPEEMS…QSVRNRRKRK (129 aa)). T5 is subject to Phosphothreonine. An Atypical zinc finger spans residues 67–115 (CCLREDGERCGRAAGNASFSKRIQKSISQKKVKIELDKSARHLYICDYH). A Glycyl lysine isopeptide (Lys-Gly) (interchain with G-Cter in SUMO2) cross-link involves residue K87. The tract at residues 123–143 (RNRRKRKGSDDDGGDSPVQDI) is disordered. The segment at 130–220 (GSDDDGGDSP…SDLKADSGVH (91 aa)) is interaction with SIN3A. Phosphoserine is present on residues S131 and S138. Phosphothreonine is present on T145. Glycyl lysine isopeptide (Lys-Gly) (interchain with G-Cter in SUMO2) cross-links involve residues K194 and K214.

It belongs to the SAP30 family. As to quaternary structure, component of the histone deacetylase complex that includes at least SIN3A, HDAC1 and HDAC2. Found in a complex composed of at least SINHCAF, SIN3A, HDAC1, SAP30, RBBP4, OGT and TET1. Interacts with HDAC1. Interacts with SIN3A, SIN3B, HDAC2, RBBP4 and NCOR1. Interacts directly with SAMSN1. Interacts with HCFC1. Interacts with SAP30BP.

It localises to the nucleus. Functionally, involved in the functional recruitment of the Sin3-histone deacetylase complex (HDAC) to a specific subset of N-CoR corepressor complexes. Capable of transcription repression by N-CoR. Active in deacetylating core histone octamers (when in a complex) but inactive in deacetylating nucleosomal histones. The chain is Histone deacetylase complex subunit SAP30 from Mus musculus (Mouse).